Reading from the N-terminus, the 244-residue chain is Large ribosomal subunit protein uL2 (244 aa).

Residues 1–12 (MGKRILVQRRGR) are compositionally biased toward basic residues. Disordered regions lie at residues 1 to 26 (MGKR…KRDG) and 193 to 225 (AMSP…KVGF).

Belongs to the universal ribosomal protein uL2 family. Part of the 50S ribosomal subunit. Forms a bridge to the 30S subunit in the 70S ribosome.

Functionally, one of the primary rRNA binding proteins. Required for association of the 30S and 50S subunits to form the 70S ribosome, for tRNA binding and peptide bond formation. It has been suggested to have peptidyltransferase activity; this is somewhat controversial. Makes several contacts with the 16S rRNA in the 70S ribosome. The polypeptide is Large ribosomal subunit protein uL2 (Pyrobaculum calidifontis (strain DSM 21063 / JCM 11548 / VA1)).